The following is an 83-amino-acid chain: Small ribosomal subunit protein bS16 (83 aa).

It belongs to the bacterial ribosomal protein bS16 family.

The polypeptide is Small ribosomal subunit protein bS16 (Shewanella halifaxensis (strain HAW-EB4)).